The primary structure comprises 199 residues: 7-methyl-GTP pyrophosphatase (199 aa).

The active-site Proton acceptor is the D72.

The protein belongs to the Maf family. YceF subfamily. Requires a divalent metal cation as cofactor.

It is found in the cytoplasm. The enzyme catalyses N(7)-methyl-GTP + H2O = N(7)-methyl-GMP + diphosphate + H(+). Its function is as follows. Nucleoside triphosphate pyrophosphatase that hydrolyzes 7-methyl-GTP (m(7)GTP). May have a dual role in cell division arrest and in preventing the incorporation of modified nucleotides into cellular nucleic acids. This Alkalilimnicola ehrlichii (strain ATCC BAA-1101 / DSM 17681 / MLHE-1) protein is 7-methyl-GTP pyrophosphatase.